The following is a 470-amino-acid chain: GTPase Der (470 aa).

EngA-type G domains follow at residues 2–165 (KTIA…GLEA) and 201–372 (IRVG…ENFS). Residues 8 to 15 (GKPNVGKS), 55 to 59 (DTGGI), 117 to 120 (NKID), 207 to 214 (GKVNVGKS), 254 to 258 (DTAGI), and 318 to 321 (NKWD) contribute to the GTP site. The KH-like domain occupies 373–457 (RRIPTSILNK…PILIRARKRG (85 aa)).

It belongs to the TRAFAC class TrmE-Era-EngA-EngB-Septin-like GTPase superfamily. EngA (Der) GTPase family. Associates with the 50S ribosomal subunit.

Functionally, GTPase that plays an essential role in the late steps of ribosome biogenesis. The sequence is that of GTPase Der from Wolinella succinogenes (strain ATCC 29543 / DSM 1740 / CCUG 13145 / JCM 31913 / LMG 7466 / NCTC 11488 / FDC 602W) (Vibrio succinogenes).